The following is a 495-amino-acid chain: Pleckstrin homology domain-containing family O member 2 (495 aa).

Residues 18-120 (TADKAGWIKK…WIKALNEGIN (103 aa)) enclose the PH domain. Phosphoserine is present on residues Ser-165 and Ser-168. The disordered stretch occupies residues 171–411 (LSRLDLDVPD…ESPQHPRLPK (241 aa)). Residues 198–213 (QEPPRALMPPVKPSPG) are compositionally biased toward pro residues. Thr-233 carries the phosphothreonine modification. Polar residues predominate over residues 235–244 (DSASSGANPE). Phosphoserine is present on residues Ser-236, Ser-238, Ser-239, Ser-274, and Ser-292. Thr-296 bears the Phosphothreonine mark. Residues 324 to 335 (SGVDASGSSQSS) show a composition bias toward low complexity. The span at 336–350 (EAPETTSPEPTQVSV) shows a compositional bias: polar residues. Ser-395 carries the post-translational modification Phosphoserine. Basic and acidic residues predominate over residues 399–411 (LLRESPQHPRLPK). Residues 444 to 469 (CAESLLSQAVEQLRQATQVLQEMRDL) are a coiled coil.

This chain is Pleckstrin homology domain-containing family O member 2 (Plekho2), found in Mus musculus (Mouse).